A 459-amino-acid chain; its full sequence is Trigger factor (459 aa).

Positions 166-245 constitute a PPIase FKBP-type domain; the sequence is GDFANIDLTA…VNSVKAEELP (80 aa).

Belongs to the FKBP-type PPIase family. Tig subfamily.

The protein resides in the cytoplasm. It carries out the reaction [protein]-peptidylproline (omega=180) = [protein]-peptidylproline (omega=0). In terms of biological role, involved in protein export. Acts as a chaperone by maintaining the newly synthesized protein in an open conformation. Functions as a peptidyl-prolyl cis-trans isomerase. The protein is Trigger factor of Bifidobacterium longum (strain DJO10A).